The sequence spans 229 residues: Potassium/proton antiporter CemA (229 aa).

4 helical membrane-spanning segments follow: residues 7–27, 114–134, 154–174, and 189–209; these read FTPL…SLSF, LICF…LLIL, ILLL…ELMI, and IISG…KYWI.

It belongs to the CemA family.

Its subcellular location is the plastid. It localises to the chloroplast inner membrane. It carries out the reaction K(+)(in) + H(+)(out) = K(+)(out) + H(+)(in). Its function is as follows. Contributes to K(+)/H(+) antiport activity by supporting proton efflux to control proton extrusion and homeostasis in chloroplasts in a light-dependent manner to modulate photosynthesis. Prevents excessive induction of non-photochemical quenching (NPQ) under continuous-light conditions. Indirectly promotes efficient inorganic carbon uptake into chloroplasts. This chain is Potassium/proton antiporter CemA, found in Gossypium barbadense (Sea Island cotton).